Here is a 456-residue protein sequence, read N- to C-terminus: MENELFMNAGVSHPPVMTSPSSSSAMLKWVSMETQPVDPSLSRNLFWEKSTEQSIFDSALSSLVSSPTPSNSNFSVGGVGGENVIMRELIGKLGNIGDIYGITASNGNSCYATPMSSPPPGSMMETKTTTPMAELSGDPGFAERAARFSCFGSRSFNSRTNSPFPINNEPPITTNEKMPRVSSSPVFKPLASHVPAGESSGELSRKRKTKSKQNSPSAVSSSKEIEEKEDSDPKRCKKSEENGDKTKSIDPYKDYIHVRARRGQATDSHSLAERVRREKISERMKLLQDLVPGCNKVTGKALMLDEIINYVQSLQRQVEFLSMKLSSVNTRLDFNMDALLSKDIFPSSNNLMHHQQVLQLDSSAETLLGDHHNKNLQLNPDISSNNVINPLETSETRSFISHLPTLAHFTDSISQYSTFSEDDLHSIIHMGFAQNRLQELNQGSSNQVPSHMKAEL.

Over residues 159-185 (RTNSPFPINNEPPITTNEKMPRVSSSP) the composition is skewed to polar residues. The tract at residues 159–254 (RTNSPFPINN…KTKSIDPYKD (96 aa)) is disordered. Over residues 223–254 (KEIEEKEDSDPKRCKKSEENGDKTKSIDPYKD) the composition is skewed to basic and acidic residues. Positions 264–314 (QATDSHSLAERVRREKISERMKLLQDLVPGCNKVTGKALMLDEIINYVQSL) constitute a bHLH domain.

Homodimer. In terms of tissue distribution, expressed constitutively in roots, leaves, stems, and flowers.

The protein resides in the nucleus. In Arabidopsis thaliana (Mouse-ear cress), this protein is Transcription factor bHLH62 (BHLH62).